The primary structure comprises 298 residues: Olfactory receptor 5AK3 (298 aa).

At 1 to 25 (MGRGNSTEVTEFHLLGFGVQHEFQH) the chain is on the extracellular side. An N-linked (GlcNAc...) asparagine glycan is attached at Asn5. A helical membrane pass occupies residues 26–46 (VLFIVLLLIYVTSLIGNIGMI). The Cytoplasmic segment spans residues 47–54 (LLIKTDSR). The helical transmembrane segment at 55–75 (LQTPMYFFPQHLAFVDICYTS) threads the bilayer. Topologically, residues 76–99 (AITPKMLQSFTEENNLITFRGCVI) are extracellular. The cysteines at positions 97 and 189 are disulfide-linked. A helical transmembrane segment spans residues 100–120 (QFLVYATFATSDCYLLAIMAM). The Cytoplasmic segment spans residues 121 to 133 (DCYVAICKPLRYP). Residues 134-154 (MIMSQTVYIQLVAGSYIIGSI) form a helical membrane-spanning segment. The N-linked (GlcNAc...) asparagine glycan is linked to Asn155. Residues 155 to 196 (NASVHTGFTFSLSFCKSNKINHFFCDGLPILALSCSNIDINI) are Extracellular-facing. A helical membrane pass occupies residues 197 to 217 (ILDVVFVGFDLMFTELVIIFS). Residues 218–237 (YIYIMVTILKMSSTAGRKKS) lie on the Cytoplasmic side of the membrane. Residues 238–258 (FSTCASHLTAVTIFYGTLSYM) form a helical membrane-spanning segment. At 259–271 (YLQPQSNNSQENM) the chain is on the extracellular side. Asn265 is a glycosylation site (N-linked (GlcNAc...) asparagine). The chain crosses the membrane as a helical span at residues 272–292 (KVASIFYGTVIPMLNPLIYSL). Residues 293–298 (RNKEGK) lie on the Cytoplasmic side of the membrane.

Belongs to the G-protein coupled receptor 1 family.

It is found in the cell membrane. Functionally, odorant receptor. The polypeptide is Olfactory receptor 5AK3 (OR5AK3P) (Homo sapiens (Human)).